We begin with the raw amino-acid sequence, 450 residues long: Probable glycylpeptide N-tetradecanoyltransferase (450 aa).

A disordered region spans residues 1–28 (MSHGHSHDGAPCGGHHGDDGAGGSRPSV). Tetradecanoyl-CoA is bound by residues Gln67, Phe68, Trp69, Phe200, Leu201, Cys202, Val203, Ser209, Arg211, Val212, and Ala213.

Belongs to the NMT family.

It is found in the cytoplasm. It catalyses the reaction N-terminal glycyl-[protein] + tetradecanoyl-CoA = N-tetradecanoylglycyl-[protein] + CoA + H(+). Functionally, adds a myristoyl group to the N-terminal glycine residue of certain cellular proteins. This Caenorhabditis elegans protein is Probable glycylpeptide N-tetradecanoyltransferase (nmt-1).